The chain runs to 432 residues: Glutamyl-tRNA reductase (432 aa).

Substrate contacts are provided by residues 55–58 (TCNR), Ser114, 119–121 (ETQ), and Gln125. Cys56 functions as the Nucleophile in the catalytic mechanism. 194–199 (GAGEMI) lines the NADP(+) pocket.

Belongs to the glutamyl-tRNA reductase family. As to quaternary structure, homodimer.

The enzyme catalyses (S)-4-amino-5-oxopentanoate + tRNA(Glu) + NADP(+) = L-glutamyl-tRNA(Glu) + NADPH + H(+). It functions in the pathway porphyrin-containing compound metabolism; protoporphyrin-IX biosynthesis; 5-aminolevulinate from L-glutamyl-tRNA(Glu): step 1/2. Its function is as follows. Catalyzes the NADPH-dependent reduction of glutamyl-tRNA(Glu) to glutamate 1-semialdehyde (GSA). The sequence is that of Glutamyl-tRNA reductase from Burkholderia lata (strain ATCC 17760 / DSM 23089 / LMG 22485 / NCIMB 9086 / R18194 / 383).